Here is a 204-residue protein sequence, read N- to C-terminus: Thiamine-phosphate synthase (204 aa).

4-amino-2-methyl-5-(diphosphooxymethyl)pyrimidine contacts are provided by residues 32 to 36 and D64; that span reads QLRMK. Mg(2+)-binding residues include D65 and D84. Residue T103 participates in 4-amino-2-methyl-5-(diphosphooxymethyl)pyrimidine binding. 129 to 131 serves as a coordination point for 2-[(2R,5Z)-2-carboxy-4-methylthiazol-5(2H)-ylidene]ethyl phosphate; sequence TTT. K132 is a binding site for 4-amino-2-methyl-5-(diphosphooxymethyl)pyrimidine. Position 165 (G165) interacts with 2-[(2R,5Z)-2-carboxy-4-methylthiazol-5(2H)-ylidene]ethyl phosphate.

This sequence belongs to the thiamine-phosphate synthase family. It depends on Mg(2+) as a cofactor.

The enzyme catalyses 2-[(2R,5Z)-2-carboxy-4-methylthiazol-5(2H)-ylidene]ethyl phosphate + 4-amino-2-methyl-5-(diphosphooxymethyl)pyrimidine + 2 H(+) = thiamine phosphate + CO2 + diphosphate. It catalyses the reaction 2-(2-carboxy-4-methylthiazol-5-yl)ethyl phosphate + 4-amino-2-methyl-5-(diphosphooxymethyl)pyrimidine + 2 H(+) = thiamine phosphate + CO2 + diphosphate. It carries out the reaction 4-methyl-5-(2-phosphooxyethyl)-thiazole + 4-amino-2-methyl-5-(diphosphooxymethyl)pyrimidine + H(+) = thiamine phosphate + diphosphate. The protein operates within cofactor biosynthesis; thiamine diphosphate biosynthesis; thiamine phosphate from 4-amino-2-methyl-5-diphosphomethylpyrimidine and 4-methyl-5-(2-phosphoethyl)-thiazole: step 1/1. In terms of biological role, condenses 4-methyl-5-(beta-hydroxyethyl)thiazole monophosphate (THZ-P) and 2-methyl-4-amino-5-hydroxymethyl pyrimidine pyrophosphate (HMP-PP) to form thiamine monophosphate (TMP). The protein is Thiamine-phosphate synthase of Bacteroides fragilis (strain ATCC 25285 / DSM 2151 / CCUG 4856 / JCM 11019 / LMG 10263 / NCTC 9343 / Onslow / VPI 2553 / EN-2).